An 859-amino-acid chain; its full sequence is MALGDKNQGSSKSQAKQKGTKGKNAQPRLKSNQLKRLKINEELKELQSRVDNFVPPSEITLFSELPMSSKTQKGLKSSHFLNPTPIQSLAIPPALQARDILGSAKTGSGKTLAFLIPLLERLYLEKWGPMDGLGAVVISPTRELAVQTFMQLRDIGKYHNFSAGLVIGGKPLKEEQERLGRMNILIATPGRLLQHLDSTVGFDSSAVKVLVLDEADRLLDLGFLPALKAIVSHFSPVQTAPGSRPSRQTLLFSATQSKDLAALAKLSLYEPLYISCNKPGEEGVMPANLEQYYAVVPLERKLDALWGFVKSHLKMKGIVFVTSGKQARRVRFIFETFRRLHPGLPLMHLHGKQKQPTRLDIFQRFSSSKSALLICTDVAARGLDFPAVDWVIQLDCPDDVDTYIHRVGRTARYQSAGTALTILCPSEEEGMKTRWGEKAIEVKRIKIKEGKMGNLKQSMQNFAFKEPEIKYLGQRAFISYMKSVHIQKDKSIFKIDALPAEAFAESMGLPGAPQIKLGNQKAAKVRGPSKEELARKAEKEEEEEEERAVVGSDEESEEDESEGLGSEDEEEEIDDEAEEIDDEEESGEESGSDEETEEEKDASKPKAPAVRTKYDRMFERKNQSILTPHYTALIAHDADNAAGAGEADDDDDVFTLARRDHNLSDDEEADTDAILGAEALAAELKKPLITSEDLSKRKLKAAASKKGLLKSRPGPEKVLFDEETGEAREFYKSGVDVEKEMSAADKRREYLEKEREIMKIQDKIDKEVAREKKKELKRKRKERERELRQMEMGDEPVAYLGGDDDYASADEGRSLSPSPAPSLEPERHAKKQRRGGVQESGAGDLEDEEALALRLLQGS.

Positions 1 to 34 are disordered; it reads MALGDKNQGSSKSQAKQKGTKGKNAQPRLKSNQL. Residues 7–17 are compositionally biased toward polar residues; that stretch reads NQGSSKSQAKQ. The Q motif signature appears at 60 to 88; sequence TLFSELPMSSKTQKGLKSSHFLNPTPIQS. The 184-residue stretch at 91-274 folds into the Helicase ATP-binding domain; sequence IPPALQARDI…KLSLYEPLYI (184 aa). ATP is bound at residue 104–111; it reads AKTGSGKT. The DEAD box motif lies at 213–216; the sequence is DEAD. The 176-residue stretch at 288-463 folds into the Helicase C-terminal domain; that stretch reads NLEQYYAVVP…NLKQSMQNFA (176 aa). 2 disordered regions span residues 512–615 and 771–859; these read APQI…TKYD and EKKK…LQGS. The span at 528 to 539 shows a compositional bias: basic and acidic residues; the sequence is PSKEELARKAEK. The span at 540-600 shows a compositional bias: acidic residues; it reads EEEEEEERAV…GSDEETEEEK (61 aa). A compositionally biased stretch (low complexity) spans 814–823; sequence SLSPSPAPSL.

Belongs to the DEAD box helicase family. DDX10/DBP4 subfamily. In terms of assembly, interacts with the U3 and U14 snoRNAs. Associates with pre-ribosomal complexes.

The protein localises to the nucleus. The protein resides in the nucleolus. It catalyses the reaction ATP + H2O = ADP + phosphate + H(+). Its function is as follows. ATP-dependent RNA helicase required for ribosome biogenesis. Involved in the release of U14 snoRNA in pre-ribosomal complexes. Required for pre-rRNA cleavage at site A2. The polypeptide is ATP-dependent RNA helicase DBP4 (DBP4) (Cryptococcus neoformans var. neoformans serotype D (strain B-3501A) (Filobasidiella neoformans)).